Consider the following 34-residue polypeptide: U1-poneritoxin-Na2a (34 aa).

Expressed by the venom gland.

Its subcellular location is the secreted. May have antimicrobial properties, like most ant linear peptides. The chain is U1-poneritoxin-Na2a from Neoponera apicalis (Ant).